Reading from the N-terminus, the 286-residue chain is Glycine--tRNA ligase alpha subunit (286 aa).

It belongs to the class-II aminoacyl-tRNA synthetase family. In terms of assembly, tetramer of two alpha and two beta subunits.

It is found in the cytoplasm. It catalyses the reaction tRNA(Gly) + glycine + ATP = glycyl-tRNA(Gly) + AMP + diphosphate. The protein is Glycine--tRNA ligase alpha subunit of Thermotoga petrophila (strain ATCC BAA-488 / DSM 13995 / JCM 10881 / RKU-1).